A 192-amino-acid chain; its full sequence is Vascular endothelial growth factor A (192 aa).

The first 26 residues, methionine 1 to alanine 26, serve as a signal peptide directing secretion. Intrachain disulfides connect cysteine 52–cysteine 94, cysteine 83–cysteine 128, and cysteine 87–cysteine 130. An N-linked (GlcNAc...) asparagine glycan is attached at asparagine 101.

The protein belongs to the PDGF/VEGF growth factor family. As to quaternary structure, homodimer; disulfide-linked. Also found as heterodimer with PGF. Interacts with FLT1/VEGFR1 and KDR/VEGFR2 receptors, heparan sulfate and heparin. As to expression, expressed by the venom gland, and probably other tissues.

The protein resides in the secreted. Its function is as follows. Growth factor active in angiogenesis, vasculogenesis and endothelial cell growth. Induces endothelial cell proliferation, promotes cell migration, inhibits apoptosis and induces permeabilization of blood vessels. This is Vascular endothelial growth factor A from Agkistrodon piscivorus piscivorus (Eastern cottonmouth).